Here is a 173-residue protein sequence, read N- to C-terminus: Lithostathine-2 (173 aa).

The first 22 residues, 1–22 (MAQNNVYLILFLCLMFLSYSQG), serve as a signal peptide directing secretion. The 131-residue stretch at 41-171 (INCPEGANAY…EAQYSFVCKF (131 aa)) folds into the C-type lectin domain. 3 disulfide bridges follow: C43-C54, C71-C169, and C144-C161.

As to expression, expressed only in regenerating islets and normal exocrine pancreas, but not in normal pancreatic islets. Expressed strongly in pancreas, weakly in liver, but not at all in gall bladder.

It is found in the secreted. Its function is as follows. Might act as an inhibitor of spontaneous calcium carbonate precipitation. The chain is Lithostathine-2 (Reg2) from Mus musculus (Mouse).